The sequence spans 399 residues: Bone morphogenetic protein 8B (399 aa).

Positions 1–19 are cleaved as a signal peptide; the sequence is MAARPGLLWLLGLALCVLG. The propeptide occupies 20–260; the sequence is GGHLSHPPHV…ANQSPVRAPR (241 aa). N155 and N340 each carry an N-linked (GlcNAc...) asparagine glycan. Cystine bridges form between C298-C364, C327-C396, and C331-C398.

Belongs to the TGF-beta family. In terms of assembly, homodimer; disulfide-linked. Expressed in testis. Expressed in decidual cells of the uterus and in trophoblast cells of the labyrinthine region of the placenta and in the inner root sheath of hair follicles of early postnatal skin. Expressed in the extraembryonic ectoderm in pregastrula and gastrula stage mouse embryos. Expressed in brown adipose tissue and brain.

Its subcellular location is the secreted. Functionally, induces cartilage and bone formation. May be the osteoinductive factor responsible for the phenomenon of epithelial osteogenesis. Plays a role in calcium regulation and bone homeostasis. Involved in the generation of primordial germ cells; this function involves Bmp4 in a synergistic manner though separate receptor complexes seem to be involved. Required for the initiation and maintenance of spermatogenesis. Signaling protein involved in regulation of thermogenesis and energy balance. Proposed to increase the peripheral response of brown adipose tissue (BAT) to adrenergic stimulation while acting centrally in the hypothalamus to increase sympathetic output to BAT. The protein is Bone morphogenetic protein 8B (Bmp8b) of Mus musculus (Mouse).